Consider the following 765-residue polypeptide: uncharacterized protein (765 aa).

A signal peptide spans 1-22 (MKLKGFLAVGVSVFGFSGLLMA). A lipid anchor (N-palmitoyl cysteine) is attached at Cys-23. Cys-23 is lipidated: S-diacylglycerol cysteine. 2 disordered regions span residues 177–203 (EGTP…LEIA) and 218–255 (TAQN…TTKS). The span at 179-192 (TPTSTTVQATVSSR) shows a compositional bias: polar residues. Residues 236 to 247 (SSSSSSTTSTTG) show a composition bias toward low complexity.

The protein belongs to the MG185/MG260 family.

The protein resides in the cell membrane. This is an uncharacterized protein from Mycoplasma genitalium (strain ATCC 33530 / DSM 19775 / NCTC 10195 / G37) (Mycoplasmoides genitalium).